A 120-amino-acid chain; its full sequence is Reprimo-like protein (120 aa).

The chain crosses the membrane as a helical span at residues 67–87 (VAQIAVLCVLSLTVVFGVFFL). Serine 109 is subject to Phosphoserine.

It belongs to the reprimo family.

It is found in the membrane. The protein is Reprimo-like protein (RPRML) of Homo sapiens (Human).